A 371-amino-acid polypeptide reads, in one-letter code: Large ribosomal subunit protein bL27m (371 aa).

Residues 1 to 27 constitute a mitochondrion transit peptide; that stretch reads MWNPILLDTSSFSFQKHVSGVFLQVRN.

It belongs to the bacterial ribosomal protein bL27 family. Component of the mitochondrial large ribosomal subunit (mt-LSU). Mature yeast 74S mitochondrial ribosomes consist of a small (37S) and a large (54S) subunit. The 37S small subunit contains a 15S ribosomal RNA (15S mt-rRNA) and 34 different proteins. The 54S large subunit contains a 21S rRNA (21S mt-rRNA) and 46 different proteins.

Its subcellular location is the mitochondrion. Functionally, component of the mitochondrial ribosome (mitoribosome), a dedicated translation machinery responsible for the synthesis of mitochondrial genome-encoded proteins, including at least some of the essential transmembrane subunits of the mitochondrial respiratory chain. The mitoribosomes are attached to the mitochondrial inner membrane and translation products are cotranslationally integrated into the membrane. In Saccharomyces cerevisiae (strain ATCC 204508 / S288c) (Baker's yeast), this protein is Large ribosomal subunit protein bL27m (MRP7).